Here is a 116-residue protein sequence, read N- to C-terminus: Large ribosomal subunit protein uL22c (116 aa).

This sequence belongs to the universal ribosomal protein uL22 family. Part of the 50S ribosomal subunit.

Its subcellular location is the plastid. The protein localises to the chloroplast. Functionally, this protein binds specifically to 23S rRNA. In terms of biological role, the globular domain of the protein is located near the polypeptide exit tunnel on the outside of the subunit, while an extended beta-hairpin is found that lines the wall of the exit tunnel in the center of the 70S ribosome. The protein is Large ribosomal subunit protein uL22c (rpl22) of Psilotum nudum (Whisk fern).